Reading from the N-terminus, the 130-residue chain is Small ribosomal subunit protein uS9 (130 aa).

The protein belongs to the universal ribosomal protein uS9 family.

In Azotobacter vinelandii (strain DJ / ATCC BAA-1303), this protein is Small ribosomal subunit protein uS9.